We begin with the raw amino-acid sequence, 490 residues long: Bifunctional protein HldE (490 aa).

A ribokinase region spans residues 1–330; it reads MERKNVESLF…GSMGFQHSDS (330 aa). 205-208 provides a ligand contact to ATP; the sequence is NRKE. Aspartate 275 is a catalytic residue. The interval 356–490 is cytidylyltransferase; the sequence is FTNGCFDLLH…DKILRAYGEE (135 aa).

The protein in the N-terminal section; belongs to the carbohydrate kinase PfkB family. In the C-terminal section; belongs to the cytidylyltransferase family. Homodimer.

It catalyses the reaction D-glycero-beta-D-manno-heptose 7-phosphate + ATP = D-glycero-beta-D-manno-heptose 1,7-bisphosphate + ADP + H(+). It carries out the reaction D-glycero-beta-D-manno-heptose 1-phosphate + ATP + H(+) = ADP-D-glycero-beta-D-manno-heptose + diphosphate. The protein operates within nucleotide-sugar biosynthesis; ADP-L-glycero-beta-D-manno-heptose biosynthesis; ADP-L-glycero-beta-D-manno-heptose from D-glycero-beta-D-manno-heptose 7-phosphate: step 1/4. It participates in nucleotide-sugar biosynthesis; ADP-L-glycero-beta-D-manno-heptose biosynthesis; ADP-L-glycero-beta-D-manno-heptose from D-glycero-beta-D-manno-heptose 7-phosphate: step 3/4. In terms of biological role, catalyzes the phosphorylation of D-glycero-D-manno-heptose 7-phosphate at the C-1 position to selectively form D-glycero-beta-D-manno-heptose-1,7-bisphosphate. Functionally, catalyzes the ADP transfer from ATP to D-glycero-beta-D-manno-heptose 1-phosphate, yielding ADP-D-glycero-beta-D-manno-heptose. In Geobacter metallireducens (strain ATCC 53774 / DSM 7210 / GS-15), this protein is Bifunctional protein HldE.